The primary structure comprises 577 residues: Vacuolar protein sorting-associated protein 45 (577 aa).

This sequence belongs to the STXBP/unc-18/SEC1 family. As to quaternary structure, interacts with PEP7 and TLG2.

The protein resides in the cytoplasm. It is found in the vacuole membrane. Functionally, essential for vacuolar protein sorting. Function in membrane traffic between the Golgi and the vacuole. The sequence is that of Vacuolar protein sorting-associated protein 45 (VPS45) from Saccharomyces cerevisiae (strain ATCC 204508 / S288c) (Baker's yeast).